The chain runs to 156 residues: Cellulose synthase operon protein D (156 aa).

Its pathway is glycan metabolism; bacterial cellulose biosynthesis. In terms of biological role, may have a major role in the perfection of crystallization, involved either in the pore structure itself or in the organization of the pores within the linear array of terminal synthesizing complexes (TCs). The sequence is that of Cellulose synthase operon protein D from Komagataeibacter xylinus (Gluconacetobacter xylinus).